We begin with the raw amino-acid sequence, 206 residues long: Small ribosomal subunit protein uS4 (206 aa).

In terms of domain architecture, S4 RNA-binding spans 96–156 (GRLDNVVYRM…EKSKKQARIK (61 aa)).

Belongs to the universal ribosomal protein uS4 family. In terms of assembly, part of the 30S ribosomal subunit. Contacts protein S5. The interaction surface between S4 and S5 is involved in control of translational fidelity.

Functionally, one of the primary rRNA binding proteins, it binds directly to 16S rRNA where it nucleates assembly of the body of the 30S subunit. Its function is as follows. With S5 and S12 plays an important role in translational accuracy. The polypeptide is Small ribosomal subunit protein uS4 (Glaesserella parasuis serovar 5 (strain SH0165) (Haemophilus parasuis)).